Reading from the N-terminus, the 740-residue chain is NAD(P)H-quinone oxidoreductase subunit 5, chloroplastic (740 aa).

16 consecutive transmembrane segments (helical) span residues W9–F29, W40–I60, I89–I109, F125–I145, I147–T167, G185–F205, N219–A239, T258–A278, V286–A306, L327–I347, A354–S374, I396–S416, W425–Y445, L543–F563, V602–I622, and S717–F737.

It belongs to the complex I subunit 5 family. In terms of assembly, NDH is composed of at least 16 different subunits, 5 of which are encoded in the nucleus.

It localises to the plastid. Its subcellular location is the chloroplast thylakoid membrane. The catalysed reaction is a plastoquinone + NADH + (n+1) H(+)(in) = a plastoquinol + NAD(+) + n H(+)(out). It catalyses the reaction a plastoquinone + NADPH + (n+1) H(+)(in) = a plastoquinol + NADP(+) + n H(+)(out). In terms of biological role, NDH shuttles electrons from NAD(P)H:plastoquinone, via FMN and iron-sulfur (Fe-S) centers, to quinones in the photosynthetic chain and possibly in a chloroplast respiratory chain. The immediate electron acceptor for the enzyme in this species is believed to be plastoquinone. Couples the redox reaction to proton translocation, and thus conserves the redox energy in a proton gradient. This Nicotiana sylvestris (Wood tobacco) protein is NAD(P)H-quinone oxidoreductase subunit 5, chloroplastic (ndhF).